The following is a 252-amino-acid chain: Glucosamine-6-phosphate deaminase (252 aa).

Aspartate 67 functions as the Proton acceptor; for enolization step in the catalytic mechanism. Asparagine 137 serves as the catalytic For ring-opening step. The active-site Proton acceptor; for ring-opening step is the histidine 139. The active-site For ring-opening step is the glutamate 144.

Belongs to the glucosamine/galactosamine-6-phosphate isomerase family. NagB subfamily.

It catalyses the reaction alpha-D-glucosamine 6-phosphate + H2O = beta-D-fructose 6-phosphate + NH4(+). Its pathway is amino-sugar metabolism; N-acetylneuraminate degradation; D-fructose 6-phosphate from N-acetylneuraminate: step 5/5. Functionally, catalyzes the reversible isomerization-deamination of glucosamine 6-phosphate (GlcN6P) to form fructose 6-phosphate (Fru6P) and ammonium ion. The polypeptide is Glucosamine-6-phosphate deaminase (Staphylococcus aureus (strain MRSA252)).